Reading from the N-terminus, the 1443-residue chain is DNA polymerase III PolC-type (1443 aa).

The Exonuclease domain maps to 408–567; that stretch reads FVIFDIETTG…YDTQALKKVF (160 aa).

Belongs to the DNA polymerase type-C family. PolC subfamily.

The protein resides in the cytoplasm. It carries out the reaction DNA(n) + a 2'-deoxyribonucleoside 5'-triphosphate = DNA(n+1) + diphosphate. Functionally, required for replicative DNA synthesis. This DNA polymerase also exhibits 3' to 5' exonuclease activity. The chain is DNA polymerase III PolC-type from Mycoplasma pneumoniae (strain ATCC 29342 / M129 / Subtype 1) (Mycoplasmoides pneumoniae).